Consider the following 525-residue polypeptide: Probable alpha-galactosidase A (525 aa).

The signal sequence occupies residues 1–17 (MHPSMTLLAILPPLVRA). The cysteines at positions 40 and 72 are disulfide-linked. Residues N43, N81, and N117 are each glycosylated (N-linked (GlcNAc...) asparagine). Residues C120 and C150 are joined by a disulfide bond. D148 (nucleophile) is an active-site residue. N197 carries an N-linked (GlcNAc...) asparagine glycan. The active-site Proton donor is D206. Residues 402–525 (PPDCPMVIPT…GLPSGVDIEA (124 aa)) form the Ricin B-type lectin domain. 2 disulfides stabilise this stretch: C422/C434 and C459/C472.

Belongs to the glycosyl hydrolase 27 family.

It is found in the secreted. The enzyme catalyses Hydrolysis of terminal, non-reducing alpha-D-galactose residues in alpha-D-galactosides, including galactose oligosaccharides, galactomannans and galactolipids.. Functionally, hydrolyzes a variety of simple alpha-D-galactoside as well as more complex molecules such as oligosaccharides and polysaccharides. In Aspergillus clavatus (strain ATCC 1007 / CBS 513.65 / DSM 816 / NCTC 3887 / NRRL 1 / QM 1276 / 107), this protein is Probable alpha-galactosidase A (aglA).